We begin with the raw amino-acid sequence, 342 residues long: Glycerol-1-phosphate dehydrogenase [NAD(P)+] (342 aa).

Residues 84 to 88 (GRPLD) and 106 to 109 (TSAS) each bind NAD(+). D111 provides a ligand contact to substrate. S115 is a binding site for NAD(+). Substrate is bound at residue D160. Zn(2+)-binding residues include D160 and H241. H245 lines the substrate pocket. Position 260 (H260) interacts with Zn(2+).

The protein belongs to the glycerol-1-phosphate dehydrogenase family. In terms of assembly, homodimer. The cofactor is Zn(2+).

It localises to the cytoplasm. The catalysed reaction is sn-glycerol 1-phosphate + NAD(+) = dihydroxyacetone phosphate + NADH + H(+). It carries out the reaction sn-glycerol 1-phosphate + NADP(+) = dihydroxyacetone phosphate + NADPH + H(+). It functions in the pathway membrane lipid metabolism; glycerophospholipid metabolism. Its function is as follows. Catalyzes the NAD(P)H-dependent reduction of dihydroxyacetonephosphate (DHAP or glycerone phosphate) to glycerol 1-phosphate (G1P). The G1P thus generated is used as the glycerophosphate backbone of phospholipids in the cellular membranes of Archaea. The protein is Glycerol-1-phosphate dehydrogenase [NAD(P)+] of Pyrobaculum neutrophilum (strain DSM 2338 / JCM 9278 / NBRC 100436 / V24Sta) (Thermoproteus neutrophilus).